The chain runs to 157 residues: Serine-protein kinase RsbW (157 aa).

It belongs to the anti-sigma-factor family.

It carries out the reaction L-seryl-[protein] + ATP = O-phospho-L-seryl-[protein] + ADP + H(+). The enzyme catalyses L-threonyl-[protein] + ATP = O-phospho-L-threonyl-[protein] + ADP + H(+). Functionally, negative regulator of sigma-B activity. Phosphorylates and inactivates its specific antagonist protein, RsbV. Upon phosphorylation of RsbV, RsbW is released and binds to sigma-B, thereby blocking its ability to form an RNA polymerase holoenzyme (E-sigma-B). The polypeptide is Serine-protein kinase RsbW (Listeria monocytogenes serotype 4b (strain CLIP80459)).